Consider the following 115-residue polypeptide: Large ribosomal subunit protein bL19 (115 aa).

The protein belongs to the bacterial ribosomal protein bL19 family.

This protein is located at the 30S-50S ribosomal subunit interface and may play a role in the structure and function of the aminoacyl-tRNA binding site. The chain is Large ribosomal subunit protein bL19 from Alkaliphilus oremlandii (strain OhILAs) (Clostridium oremlandii (strain OhILAs)).